The chain runs to 262 residues: Pyridoxine 5'-phosphate synthase (262 aa).

Asn-6 lines the 3-amino-2-oxopropyl phosphate pocket. 8–9 (DH) serves as a coordination point for 1-deoxy-D-xylulose 5-phosphate. Residue Arg-17 participates in 3-amino-2-oxopropyl phosphate binding. His-43 acts as the Proton acceptor in catalysis. 1-deoxy-D-xylulose 5-phosphate contacts are provided by Arg-45 and His-50. Glu-70 (proton acceptor) is an active-site residue. Thr-102 is a 1-deoxy-D-xylulose 5-phosphate binding site. The active-site Proton donor is the His-215. Residues Gly-216 and 237–238 (GH) each bind 3-amino-2-oxopropyl phosphate.

Belongs to the PNP synthase family. Homooctamer; tetramer of dimers.

It localises to the cytoplasm. It catalyses the reaction 3-amino-2-oxopropyl phosphate + 1-deoxy-D-xylulose 5-phosphate = pyridoxine 5'-phosphate + phosphate + 2 H2O + H(+). The protein operates within cofactor biosynthesis; pyridoxine 5'-phosphate biosynthesis; pyridoxine 5'-phosphate from D-erythrose 4-phosphate: step 5/5. Its function is as follows. Catalyzes the complicated ring closure reaction between the two acyclic compounds 1-deoxy-D-xylulose-5-phosphate (DXP) and 3-amino-2-oxopropyl phosphate (1-amino-acetone-3-phosphate or AAP) to form pyridoxine 5'-phosphate (PNP) and inorganic phosphate. The protein is Pyridoxine 5'-phosphate synthase of Helicobacter pylori (strain P12).